A 174-amino-acid chain; its full sequence is RNA pyrophosphohydrolase (174 aa).

One can recognise a Nudix hydrolase domain in the interval 6–149 (GFRANVGIII…KRDVYRKVMK (144 aa)). The Nudix box motif lies at 38 to 59 (GGVDDGESAEEAMYRELYEEVG).

This sequence belongs to the Nudix hydrolase family. RppH subfamily. Requires a divalent metal cation as cofactor.

In terms of biological role, accelerates the degradation of transcripts by removing pyrophosphate from the 5'-end of triphosphorylated RNA, leading to a more labile monophosphorylated state that can stimulate subsequent ribonuclease cleavage. The polypeptide is RNA pyrophosphohydrolase (Shewanella oneidensis (strain ATCC 700550 / JCM 31522 / CIP 106686 / LMG 19005 / NCIMB 14063 / MR-1)).